Here is a 640-residue protein sequence, read N- to C-terminus: ATP-dependent rRNA helicase spb4 (640 aa).

A Q motif motif is present at residues 14 to 42 (WDAVTPALSEWVLEAMSSMGFTRMTPVQA). Residues 45 to 249 (IPLFMAHKDV…RVGLRNPVKV (205 aa)) enclose the Helicase ATP-binding domain. 58-65 (AVTGSGKT) is a binding site for ATP. The short motif at 197–200 (DEAD) is the DEAD box element. The Helicase C-terminal domain maps to 283 to 437 (ALKRILSSVQ…LITFSDADAA (155 aa)). A coiled-coil region spans residues 521-629 (AYKDKQREKR…AAKAAGAKAD (109 aa)). Disordered stretches follow at residues 531-595 (RKEL…EKQK) and 607-640 (RKKN…QGFD). Basic residues predominate over residues 568–582 (KKLKRREQKKSKHEK). Residues 583–595 (ARWEKMTEEEKQK) are compositionally biased toward basic and acidic residues. Over residues 630–640 (GDDEEEFQGFD) the composition is skewed to acidic residues.

The protein belongs to the DEAD box helicase family. DDX55/SPB4 subfamily. As to quaternary structure, component of pre-60S ribosomal complexes.

Its subcellular location is the nucleus. It is found in the nucleolus. It carries out the reaction ATP + H2O = ADP + phosphate + H(+). Its function is as follows. ATP-binding RNA helicase involved in the biogenesis of 60S ribosomal subunits. Binds 90S pre-ribosomal particles and dissociates from pre-60S ribosomal particles after processing of 27SB pre-rRNA. Required for the normal formation of 18S rRNA through the processing of pre-rRNAs at sites A0, A1 and A2, and the normal formation of 25S and 5.8S rRNAs through the processing of pre-rRNAs at sites C1 and C2. This chain is ATP-dependent rRNA helicase spb4, found in Neosartorya fischeri (strain ATCC 1020 / DSM 3700 / CBS 544.65 / FGSC A1164 / JCM 1740 / NRRL 181 / WB 181) (Aspergillus fischerianus).